Consider the following 189-residue polypeptide: Dual-action ribosomal maturation protein DarP (189 aa).

A disordered region spans residues 1 to 22; that stretch reads MWKNGAMRGCNKETGEFLGPSR.

This sequence belongs to the DarP family.

The protein resides in the cytoplasm. Member of a network of 50S ribosomal subunit biogenesis factors which assembles along the 30S-50S interface, preventing incorrect 23S rRNA structures from forming. Promotes peptidyl transferase center (PTC) maturation. This chain is Dual-action ribosomal maturation protein DarP, found in Xylella fastidiosa (strain Temecula1 / ATCC 700964).